The chain runs to 335 residues: PA-phosphatase related-family protein DDB_G0275547 (335 aa).

Transmembrane regions (helical) follow at residues 43–63 (VMYLFDWMMVVILLIVGGILF), 93–113 (VLIPVIIALPLAIIIVVSLIV), 124–144 (ILGLAQSLALTLLLTGSFKCF), 202–222 (SITAASFGFLALFIHAKFKIF), 226–246 (GHIFLYVIVSGCIIGAGLIGI), and 254–274 (HTFLNVLAGWSIGLIIALSCY).

The protein belongs to the PA-phosphatase related phosphoesterase family.

It localises to the membrane. The polypeptide is PA-phosphatase related-family protein DDB_G0275547 (Dictyostelium discoideum (Social amoeba)).